Here is a 263-residue protein sequence, read N- to C-terminus: Undecaprenyl-diphosphatase (263 aa).

Transmembrane regions (helical) follow at residues 1–21 (MSYLHAIILGIVEGITEFLPI), 41–61 (FTKAFEVIIQFGAIMSVLVLY), 69–89 (WGFYRKLFVAFLPTAIIGFVV), 96–116 (LMGSVQVVAWSLIIGGVILIW), 147–167 (AIAMIPGVSRSGATIMGGLTL), 177–197 (FSFFLAVPTMAAATLYKLLKI), 208–228 (LLLVGCAVAFVVAMIAIKFFI), and 238–258 (GFGYYRIVLGLVILILLYTGH).

The protein belongs to the UppP family.

The protein localises to the cell inner membrane. It catalyses the reaction di-trans,octa-cis-undecaprenyl diphosphate + H2O = di-trans,octa-cis-undecaprenyl phosphate + phosphate + H(+). Catalyzes the dephosphorylation of undecaprenyl diphosphate (UPP). Confers resistance to bacitracin. In Bdellovibrio bacteriovorus (strain ATCC 15356 / DSM 50701 / NCIMB 9529 / HD100), this protein is Undecaprenyl-diphosphatase.